The sequence spans 136 residues: Histone H3.1/H3.2 (136 aa).

The segment at 1–43 is disordered; that stretch reads MARTKQTARKSTGGKAPRKQLASKAARKSAPSTGGVKKPHRYK. N6,N6,N6-trimethyllysine; alternate is present on K5. K5 carries the post-translational modification N6,N6-dimethyllysine; alternate. Residues K5 and K10 each carry the N6-methyllysine; alternate modification. N6-acetyllysine; alternate is present on K10. Phosphoserine is present on S11. Position 15 is an N6,N6-dimethyllysine; alternate (K15). An N6-acetyllysine; alternate mark is found at K15, K19, K24, K28, and K37. Residues K19, K24, K28, and K37 each carry the N6-methyllysine; alternate modification. Residues K28 and K37 each carry the N6,N6,N6-trimethyllysine; alternate modification. N6,N6-dimethyllysine; alternate is present on residues K28 and K37. Residues K57 and K65 each carry the N6-acetyllysine modification. N6,N6,N6-trimethyllysine; alternate is present on K80. K80 is subject to N6,N6-dimethyllysine; alternate. Residue K80 is modified to N6-methyllysine; alternate.

This sequence belongs to the histone H3 family. The nucleosome is a histone octamer containing two molecules each of H2A, H2B, H3 and H4 assembled in one H3-H4 heterotetramer and two H2A-H2B heterodimers. The octamer wraps approximately 147 bp of DNA. In terms of processing, phosphorylated to form H3S10ph. H3S10ph promotes subsequent H3K14ac formation and is required for transcriptional activation through TBP recruitment to the promoters. Mono-, di- and trimethylated by the COMPASS complex to form H3K4me1/2/3. H3K4me activates gene expression by regulating transcription elongation and plays a role in telomere length maintenance. H3K4me enrichment correlates with transcription levels, and occurs in a 5' to 3' gradient with H3K4me3 enrichment at the 5'-end of genes, shifting to H3K4me2 and then H3K4me1. Methylated by SET2 to form H3K36me. H3K36me represses gene expression. Methylated by DOT1 to form H3K79me. H3K79me is required for association of SIR proteins with telomeric regions and for telomeric silencing. The COMPASS-mediated formation of H3K4me2/3 and the DOT1-mediated formation of H3K79me require H2BK123ub1. Post-translationally, acetylation of histone H3 leads to transcriptional activation. H3K14ac formation by GCN5 is promoted by H3S10ph. H3K14ac can also be formed by ESA1. H3K56ac formation occurs predominantly in newly synthesized H3 molecules during G1, S and G2/M of the cell cycle and may be involved in DNA repair.

The protein localises to the nucleus. The protein resides in the chromosome. Its function is as follows. Core component of nucleosome. Nucleosomes wrap and compact DNA into chromatin, limiting DNA accessibility to the cellular machineries which require DNA as a template. Histones thereby play a central role in transcription regulation, DNA repair, DNA replication and chromosomal stability. DNA accessibility is regulated via a complex set of post-translational modifications of histones, also called histone code, and nucleosome remodeling. The sequence is that of Histone H3.1/H3.2 (HHT1) from Meyerozyma guilliermondii (strain ATCC 6260 / CBS 566 / DSM 6381 / JCM 1539 / NBRC 10279 / NRRL Y-324) (Yeast).